The chain runs to 156 residues: Keratin, high-sulfur matrix protein, B2B (156 aa).

N-acetylalanine is present on Ala-1. 4 consecutive repeats follow at residues 26–35 (PTCSQTSCCQ), 36–45 (PTSIQTSCCQ), 46–55 (PISIQTSCCQ), and 56–65 (PTCLQTSGCE).

The keratin products of mammalian epidermal derivatives such as wool and hair consist of microfibrils embedded in a rigid matrix of other proteins. The matrix proteins include the high-sulfur and high-tyrosine keratins, having molecular weights of 6-20 kDa, whereas the microfibrils contain the larger, low-sulfur keratins (40-56 kDa). This Ovis aries (Sheep) protein is Keratin, high-sulfur matrix protein, B2B.